A 273-amino-acid chain; its full sequence is Zinc finger protein AZF2 (273 aa).

Residues 33–64 (LKRKRSKRQRSHSPSSSSSSPPRSRPKSQNQD) are disordered. Residues 34–43 (KRKRSKRQRS) are compositionally biased toward basic residues. Residues 44 to 54 (HSPSSSSSSPP) are compositionally biased toward low complexity. 2 C2H2-type zinc fingers span residues 106 to 128 (YKCN…KASH) and 165 to 187 (HECS…KRCH). The disordered stretch occupies residues 195–215 (GGGGGSKSISHSGSVSSTVSE). The span at 201 to 213 (KSISHSGSVSSTV) shows a compositional bias: low complexity.

Expressed in roots, radicles, cotyledons, hypocotyls, leaf veins, stems, sepals, petals, stamens, placenta, funiculi and maturated seeds.

The protein resides in the nucleus. Transcriptional repressor involved in the inhibition of plant growth under abiotic stress conditions. Can repress the expression of various genes, including osmotic stress and abscisic acid-repressive genes and auxin-inducible genes, by binding to their promoter regions in a DNA sequence-specific manner. Acts as a negative regulator of abscisic acid (ABA) signaling during seed germination. Probably involved in jasmonate (JA) early signaling response. May regulate the expression of the JA biosynthesis gene LOX3 and control the expression of TIFY10A/JAZ1, a key repressor in the JA signaling cascade. May act as a positive regulator of leaf senescence. Has been identified as a suppressor of the deficiency of yeast snf4 mutant to grow on non-fermentable carbon source. This chain is Zinc finger protein AZF2 (AZF2), found in Arabidopsis thaliana (Mouse-ear cress).